Here is a 226-residue protein sequence, read N- to C-terminus: ATP-dependent Clp protease proteolytic subunit 2 (226 aa).

Residue Ser118 is the Nucleophile of the active site. The active site involves His143.

Belongs to the peptidase S14 family. Fourteen ClpP subunits assemble into 2 heptameric rings which stack back to back to give a disk-like structure with a central cavity, resembling the structure of eukaryotic proteasomes.

The protein localises to the cytoplasm. It carries out the reaction Hydrolysis of proteins to small peptides in the presence of ATP and magnesium. alpha-casein is the usual test substrate. In the absence of ATP, only oligopeptides shorter than five residues are hydrolyzed (such as succinyl-Leu-Tyr-|-NHMec, and Leu-Tyr-Leu-|-Tyr-Trp, in which cleavage of the -Tyr-|-Leu- and -Tyr-|-Trp bonds also occurs).. Functionally, cleaves peptides in various proteins in a process that requires ATP hydrolysis. Has a chymotrypsin-like activity. Plays a major role in the degradation of misfolded proteins. This chain is ATP-dependent Clp protease proteolytic subunit 2, found in Synechocystis sp. (strain ATCC 27184 / PCC 6803 / Kazusa).